Reading from the N-terminus, the 537-residue chain is Trypsin-resistant surface T6 protein (537 aa).

An N-terminal signal peptide occupies residues M1–S22. The segment at G310–E330 is hydrophilic. The short motif at L504–G508 is the LPXTG sorting signal element. T507 is subject to Pentaglycyl murein peptidoglycan amidated threonine. Positions G508–A537 are cleaved as a propeptide — removed by sortase.

It is found in the secreted. It localises to the cell wall. The sequence is that of Trypsin-resistant surface T6 protein (tee6) from Streptococcus pyogenes serotype M6 (strain ATCC BAA-946 / MGAS10394).